Consider the following 360-residue polypeptide: Flavone O-methyltransferase 1 (360 aa).

Residue 127–133 (MNQDKVL) coordinates substrate. The substrate binding stretch occupies residues 159-177 (AFEYHGTDPRFNRVFNEGM). S-adenosyl-L-methionine contacts are provided by G205, D228, D248, M249, and K262. H266 functions as the Proton acceptor in the catalytic mechanism.

Belongs to the class I-like SAM-binding methyltransferase superfamily. Cation-independent O-methyltransferase family. COMT subfamily. In terms of assembly, homodimer.

In terms of biological role, flavone-specific O-methyltransferase with a preference for flavones &gt; flavonols. Active with tricetin, luteolin, quercitin and eriodictyol. Very low activity with phenylpropanoids (5-hydroxyferulic acid and caffeic acid). Catalyzes the sequential O-methylation of tricetin via 3'-O-methyltricetin, 3',5'-O-methyltricetin to 3',4',5'-O-trimethyltricetin. This chain is Flavone O-methyltransferase 1 (OMT1), found in Triticum aestivum (Wheat).